The sequence spans 83 residues: RNA-binding protein Hfq (83 aa).

Residues 10-69 (DPFLNALRREHVPVSIYLVNGIKLQGQIESFDQYVVLLRNTVTQMVYKHAISTIVPGRAV) form the Sm domain.

Belongs to the Hfq family. Homohexamer.

RNA chaperone that binds small regulatory RNA (sRNAs) and mRNAs to facilitate mRNA translational regulation in response to envelope stress, environmental stress and changes in metabolite concentrations. Also binds with high specificity to tRNAs. This chain is RNA-binding protein Hfq, found in Paracidovorax citrulli (strain AAC00-1) (Acidovorax citrulli).